Reading from the N-terminus, the 412-residue chain is MKIYLVGGAVRDALLGLPVKDRDWVVVGSTPQEMLDAGYQQVGRDFPVFLHPQTHEEYALARTERKSGSGYTGFTCYAAPDVTLEDDLKRRDLTINALAQDDNGEIIDPYNGLGDLQNRLLRHVSPAFGEDPLRVLRVARFAARYAHLGFRIADETLALMREMTHAGELEHLTPERVWKETESALTTRNPQVFFQVLRDCGALRVLFPEIDALFGVPAPAKWHPEIDTGIHTLMTLSMAAMLSPQVDVRFATLCHDLGKGLTPPELWPRHHGHGPAGVKLVEQLCQRLRVPNEIRDLARLVAEFHDLIHTFPMLNPKTIVKLFDSIDAWRKPQRVEQLALTSEADVRGRTGFESADYPQGRWLREAWEVAQSVPTKAVVEAGFKGVEIREELTRRRIAAVASWKEQRCPKPE.

ATP-binding residues include Gly-8 and Arg-11. 2 residues coordinate CTP: Gly-8 and Arg-11. 2 residues coordinate Mg(2+): Asp-21 and Asp-23. Residues Arg-91, Arg-137, and Arg-140 each coordinate ATP. Residues Arg-91, Arg-137, and Arg-140 each contribute to the CTP site. Residues 228-329 form the HD domain; it reads TGIHTLMTLS…VKLFDSIDAW (102 aa).

It belongs to the tRNA nucleotidyltransferase/poly(A) polymerase family. Bacterial CCA-adding enzyme type 1 subfamily. Monomer. Can also form homodimers and oligomers. Mg(2+) serves as cofactor. Requires Ni(2+) as cofactor.

It catalyses the reaction a tRNA precursor + 2 CTP + ATP = a tRNA with a 3' CCA end + 3 diphosphate. The catalysed reaction is a tRNA with a 3' CCA end + 2 CTP + ATP = a tRNA with a 3' CCACCA end + 3 diphosphate. Functionally, catalyzes the addition and repair of the essential 3'-terminal CCA sequence in tRNAs without using a nucleic acid template. Adds these three nucleotides in the order of C, C, and A to the tRNA nucleotide-73, using CTP and ATP as substrates and producing inorganic pyrophosphate. tRNA 3'-terminal CCA addition is required both for tRNA processing and repair. Also involved in tRNA surveillance by mediating tandem CCA addition to generate a CCACCA at the 3' terminus of unstable tRNAs. While stable tRNAs receive only 3'-terminal CCA, unstable tRNAs are marked with CCACCA and rapidly degraded. The polypeptide is Multifunctional CCA protein (Escherichia coli (strain K12 / MC4100 / BW2952)).